Reading from the N-terminus, the 284-residue chain is Bifunctional protein FolD (284 aa).

NADP(+)-binding positions include 164 to 166 and Ser-189; that span reads GRS.

Belongs to the tetrahydrofolate dehydrogenase/cyclohydrolase family. In terms of assembly, homodimer.

The enzyme catalyses (6R)-5,10-methylene-5,6,7,8-tetrahydrofolate + NADP(+) = (6R)-5,10-methenyltetrahydrofolate + NADPH. It carries out the reaction (6R)-5,10-methenyltetrahydrofolate + H2O = (6R)-10-formyltetrahydrofolate + H(+). Its pathway is one-carbon metabolism; tetrahydrofolate interconversion. Catalyzes the oxidation of 5,10-methylenetetrahydrofolate to 5,10-methenyltetrahydrofolate and then the hydrolysis of 5,10-methenyltetrahydrofolate to 10-formyltetrahydrofolate. The polypeptide is Bifunctional protein FolD (Listeria monocytogenes serotype 4a (strain HCC23)).